Reading from the N-terminus, the 327-residue chain is MSEKIAVIGSGAFGTALAAVIALAGRSAVTLVGRNPSLMADLKSERLHDAVLPGIVLPESLEFSAEAEAVAGASIVLFAMPSQAQADAVRQYGLYLSKDAVVVTCAKGIERTTGNLLTDMLERELPDHPVAVLSGPGFAADIAKGLPTAMAIAADGMETAERLAQAISGRTFRLYASTDRIGVQLGGALKNVLAIACGIVEGRGIGESARAALIARGLAEMSRFVVAKGGQADTVRGLSGLGDLVLTATSHQSRNLRFGIALGRGEKTDPAHGALVEGAFAASVASRLAAELSISMPITDAVSAIIDGRLDISDAIEQLMTRPITTE.

The NADPH site is built by F13, R34, and K107. Sn-glycerol 3-phosphate-binding residues include K107 and G135. A139 serves as a coordination point for NADPH. Positions 190, 243, 253, 254, and 255 each coordinate sn-glycerol 3-phosphate. The active-site Proton acceptor is the K190. R254 provides a ligand contact to NADPH. V276 and E277 together coordinate NADPH.

The protein belongs to the NAD-dependent glycerol-3-phosphate dehydrogenase family.

The protein resides in the cytoplasm. It carries out the reaction sn-glycerol 3-phosphate + NAD(+) = dihydroxyacetone phosphate + NADH + H(+). The enzyme catalyses sn-glycerol 3-phosphate + NADP(+) = dihydroxyacetone phosphate + NADPH + H(+). It participates in membrane lipid metabolism; glycerophospholipid metabolism. Catalyzes the reduction of the glycolytic intermediate dihydroxyacetone phosphate (DHAP) to sn-glycerol 3-phosphate (G3P), the key precursor for phospholipid synthesis. This chain is Glycerol-3-phosphate dehydrogenase [NAD(P)+], found in Rhizobium etli (strain ATCC 51251 / DSM 11541 / JCM 21823 / NBRC 15573 / CFN 42).